Here is a 332-residue protein sequence, read N- to C-terminus: Glycerol-3-phosphate dehydrogenase [NAD(P)+] (332 aa).

NADPH is bound by residues Trp-11, Arg-30, and Lys-108. 3 residues coordinate sn-glycerol 3-phosphate: Lys-108, Gly-137, and Ser-139. Ala-141 contributes to the NADPH binding site. Positions 192, 245, 255, 256, and 257 each coordinate sn-glycerol 3-phosphate. Lys-192 functions as the Proton acceptor in the catalytic mechanism. Arg-256 is a binding site for NADPH. NADPH is bound by residues Val-280 and Glu-282.

This sequence belongs to the NAD-dependent glycerol-3-phosphate dehydrogenase family.

The protein localises to the cytoplasm. The enzyme catalyses sn-glycerol 3-phosphate + NAD(+) = dihydroxyacetone phosphate + NADH + H(+). It carries out the reaction sn-glycerol 3-phosphate + NADP(+) = dihydroxyacetone phosphate + NADPH + H(+). The protein operates within membrane lipid metabolism; glycerophospholipid metabolism. Functionally, catalyzes the reduction of the glycolytic intermediate dihydroxyacetone phosphate (DHAP) to sn-glycerol 3-phosphate (G3P), the key precursor for phospholipid synthesis. This is Glycerol-3-phosphate dehydrogenase [NAD(P)+] from Burkholderia vietnamiensis (strain G4 / LMG 22486) (Burkholderia cepacia (strain R1808)).